A 232-amino-acid chain; its full sequence is Large ribosomal subunit protein uL1 (232 aa).

It belongs to the universal ribosomal protein uL1 family. As to quaternary structure, part of the 50S ribosomal subunit.

Functionally, binds directly to 23S rRNA. The L1 stalk is quite mobile in the ribosome, and is involved in E site tRNA release. Protein L1 is also a translational repressor protein, it controls the translation of the L11 operon by binding to its mRNA. The polypeptide is Large ribosomal subunit protein uL1 (Amoebophilus asiaticus (strain 5a2)).